We begin with the raw amino-acid sequence, 383 residues long: Na(+)/H(+) antiporter NhaA (383 aa).

The next 11 helical transmembrane spans lie at 14–34 (AGGILLVIAAAIAMTIANSPL), 47–67 (FGMSVSHWINDGLMAVFFLLI), 87–107 (IFPAIAAVGGMLAPALIYVAF), 117–137 (GWAIPAATDIAFALGIMALLG), 146–166 (VFLLALAIIDDLGVVVIIALF), 171–191 (LSSMALLVGFVMTGVLFMLNA), 205–225 (AILWFAVLKSGVHATLAGVVI), 252–272 (VAFGILPLFAFANAGISLEGV), 280–300 (MLPLGIALGLLIGKPLGIFSF), 321–341 (IFAVSVLCGIGFTMSIFISSL), and 356–376 (LGILMGSTTAAVLGYALLHFS).

The protein belongs to the NhaA Na(+)/H(+) (TC 2.A.33) antiporter family.

It is found in the cell inner membrane. It carries out the reaction Na(+)(in) + 2 H(+)(out) = Na(+)(out) + 2 H(+)(in). The enzyme catalyses Li(+)(in) + 2 H(+)(out) = Li(+)(out) + 2 H(+)(in). Its activity is regulated as follows. Activity is regulated by pH. Active at alkaline pH. Amiloride strongly reduces affinity for Na(+), but does not change the Vmax. In terms of biological role, na(+)/H(+) antiporter that extrudes sodium in exchange for external protons. Can also transport lithium and potassium. The protein is Na(+)/H(+) antiporter NhaA of Vibrio parahaemolyticus serotype O3:K6 (strain RIMD 2210633).